The chain runs to 379 residues: Dual-specificity RNA methyltransferase RlmN (379 aa).

E96 acts as the Proton acceptor in catalysis. The 241-residue stretch at 102 to 342 (TDDRGTLCVS…TRTTRGDDID (241 aa)) folds into the Radical SAM core domain. A disulfide bond links C109 and C345. 3 residues coordinate [4Fe-4S] cluster: C116, C120, and C123. Residues 170 to 171 (GE), S202, 224 to 226 (SLH), and N302 contribute to the S-adenosyl-L-methionine site. The S-methylcysteine intermediate role is filled by C345.

This sequence belongs to the radical SAM superfamily. RlmN family. It depends on [4Fe-4S] cluster as a cofactor.

The protein resides in the cytoplasm. The enzyme catalyses adenosine(2503) in 23S rRNA + 2 reduced [2Fe-2S]-[ferredoxin] + 2 S-adenosyl-L-methionine = 2-methyladenosine(2503) in 23S rRNA + 5'-deoxyadenosine + L-methionine + 2 oxidized [2Fe-2S]-[ferredoxin] + S-adenosyl-L-homocysteine. The catalysed reaction is adenosine(37) in tRNA + 2 reduced [2Fe-2S]-[ferredoxin] + 2 S-adenosyl-L-methionine = 2-methyladenosine(37) in tRNA + 5'-deoxyadenosine + L-methionine + 2 oxidized [2Fe-2S]-[ferredoxin] + S-adenosyl-L-homocysteine. In terms of biological role, specifically methylates position 2 of adenine 2503 in 23S rRNA and position 2 of adenine 37 in tRNAs. m2A2503 modification seems to play a crucial role in the proofreading step occurring at the peptidyl transferase center and thus would serve to optimize ribosomal fidelity. In Pseudomonas entomophila (strain L48), this protein is Dual-specificity RNA methyltransferase RlmN.